The primary structure comprises 267 residues: Undecaprenyl-diphosphatase 1 (267 aa).

Transmembrane regions (helical) follow at residues 6-26 (VLVV…AAGL), 41-60 (AALS…IYFW), 83-103 (HLLL…WLVL), 109-129 (LVGQ…LWGC), 142-162 (MSWV…VPGV), 185-205 (FSML…FWGL), 217-237 (LLMA…GMMA), and 244-264 (FVPF…LVYF).

This sequence belongs to the UppP family.

It localises to the cell inner membrane. It catalyses the reaction di-trans,octa-cis-undecaprenyl diphosphate + H2O = di-trans,octa-cis-undecaprenyl phosphate + phosphate + H(+). Catalyzes the dephosphorylation of undecaprenyl diphosphate (UPP). Confers resistance to bacitracin. The chain is Undecaprenyl-diphosphatase 1 from Paramagnetospirillum magneticum (strain ATCC 700264 / AMB-1) (Magnetospirillum magneticum).